The sequence spans 640 residues: 2-hydroxyacyl-CoA lyase 2 (640 aa).

The helical transmembrane segment at 2–22 (VLFLIIAAIIIGLLLWKWLDV) threads the bilayer. Glutamate 102 contacts thiamine diphosphate. The interval 477-557 (DFVGSAAYIV…VIGIVGNDAC (81 aa)) is thiamine pyrophosphate binding. Residues aspartate 528 and asparagine 554 each coordinate Mg(2+).

It belongs to the TPP enzyme family. Requires Mg(2+) as cofactor. Thiamine diphosphate serves as cofactor.

The protein resides in the endoplasmic reticulum membrane. The enzyme catalyses 2-hydroxyoctadecanoyl-CoA = heptadecanal + formyl-CoA. The catalysed reaction is (2R)-hydroxyhexadecanoyl-CoA = pentadecanal + formyl-CoA. Endoplasmic reticulum 2-OH acyl-CoA lyase involved in the cleavage (C1 removal) reaction in the fatty acid alpha-oxydation in a thiamine pyrophosphate (TPP)-dependent manner. The sequence is that of 2-hydroxyacyl-CoA lyase 2 from Caenorhabditis elegans.